The chain runs to 378 residues: MAKKLKKNEEITKKFGDERRKALDDALKNIEKDFGKGAVMRLGERAEQKVQVMSSGSLALDIALGAGGYPKGRIIEIYGPESSGKTTVALHAVAQAQKEGGIAAFIDAEHALDPAYAAALGVNIDELLLSQPDSGEQGLEIAGKLIDSGAVDLVVVDSVAALVPRAEIDGDIGDSHVGLQARMMSQAMRKLSASINKTKTIAIFINQLREKVGVMFGNPETTPGGRALKFYASVRLDVRGTTQIKGTGDQKDSSIGKETKIKVVKNKVAPPFKVAEVEIMYGEGISRTGELVKIASDLDIIQKAGAWFSYNGEKIGQGSENAKRYLADHPELFDEIDLKVRVKFGLLEESEEESAMAVASEETDDLALDLDNGIEIED.

Residue 79 to 86 (GPESSGKT) participates in ATP binding.

The protein belongs to the RecA family.

The protein localises to the cytoplasm. Functionally, can catalyze the hydrolysis of ATP in the presence of single-stranded DNA, the ATP-dependent uptake of single-stranded DNA by duplex DNA, and the ATP-dependent hybridization of homologous single-stranded DNAs. It interacts with LexA causing its activation and leading to its autocatalytic cleavage. The polypeptide is Protein RecA (Streptococcus pyogenes serotype M1).